Consider the following 152-residue polypeptide: Transcriptional regulator MraZ (152 aa).

SpoVT-AbrB domains are found at residues Ala5–Glu52 and Ala81–Thr124.

This sequence belongs to the MraZ family. As to quaternary structure, forms oligomers.

Its subcellular location is the cytoplasm. It localises to the nucleoid. In terms of biological role, negatively regulates its own expression and that of the subsequent genes in the proximal part of the division and cell wall (dcw) gene cluster. Acts by binding directly to DNA. May also regulate the expression of genes outside the dcw cluster. This chain is Transcriptional regulator MraZ, found in Escherichia coli O127:H6 (strain E2348/69 / EPEC).